A 259-amino-acid chain; its full sequence is Eukaryotic translation initiation factor 4E1 (259 aa).

A disordered region spans residues Met1 to Asp70. Residues Phe18–Gln27 show a composition bias toward polar residues. Over residues Glu41 to Pro51 the composition is skewed to basic and acidic residues. Residues Thr54–Asp70 are compositionally biased toward low complexity. MRNA contacts are provided by residues Trp100 to Glu101, Trp146 to Glu147, and Arg199 to Lys204.

This sequence belongs to the eukaryotic initiation factor 4E family. EIF4F is a multi-subunit complex, the composition of which varies with external and internal environmental conditions. It is composed of at least eIF4A, eIF4E1 and eIF4G1. Recruited by cup in oocytes and in early embryos, preventing the interaction with eIF4G. The interaction with cup therefore prevents the translation of key transcripts such as oskar (osk) and nanos (nos) in some regions in the early embryo. Interacts with mxt. Interacts with 4E-T and Thor. Forms a RNP containing at least me31B, eIF4E1, cup, tral and pAbp; this interaction is required for the translational silencing of maternal mRNAs during the maternal-to-zygotic transition. Phosphorylation increases the ability of the protein to bind to mRNA caps and to form the eIF4F complex. In terms of tissue distribution, expressed at the posterior end of developing oocytes (at protein level). Preferential expression in the pole cells, at different developmental stages.

The protein resides in the cytoplasm. It is found in the cytoplasmic ribonucleoprotein granule. It localises to the nucleus. The protein localises to the nuclear body. Its function is as follows. Recognizes and binds the 7-methylguanosine (m7G)-containing mRNA cap during an early step in the initiation of protein synthesis and facilitates ribosome binding by inducing the unwinding of the mRNAs secondary structures. In 0-1 hour embryos, forms a complex with me31B, cup, tral and pAbp which binds to various mRNAs including maternal mRNAs, and down-regulates their expression during the maternal-to-zygotic transition. This is Eukaryotic translation initiation factor 4E1 from Drosophila melanogaster (Fruit fly).